A 332-amino-acid chain; its full sequence is Thiosulfate-binding protein (332 aa).

Positions 1 to 22 (MKRLFSASLLAAGLALGGAAHA) are cleaved as a signal peptide.

Belongs to the prokaryotic sulfate-binding protein family.

The protein localises to the periplasm. Its function is as follows. Binds thiosulfate specifically and with high affinity. Has no detectable affinity for sulfate. This is Thiosulfate-binding protein from Pseudomonas aeruginosa (strain ATCC 15692 / DSM 22644 / CIP 104116 / JCM 14847 / LMG 12228 / 1C / PRS 101 / PAO1).